Consider the following 377-residue polypeptide: TraB domain-containing protein (377 aa).

Methionine 1 carries the post-translational modification N-acetylmethionine. The tract at residues 1 to 34 is disordered; the sequence is MEEPEEQPPHEADTEPVVTSGASEAVPRVLPGDP. Residue threonine 65 is modified to Phosphothreonine.

This is TraB domain-containing protein (TRABD) from Bos taurus (Bovine).